An 874-amino-acid chain; its full sequence is Alanine--tRNA ligase (874 aa).

Positions 563, 567, 665, and 669 each coordinate Zn(2+).

It belongs to the class-II aminoacyl-tRNA synthetase family. It depends on Zn(2+) as a cofactor.

The protein localises to the cytoplasm. The enzyme catalyses tRNA(Ala) + L-alanine + ATP = L-alanyl-tRNA(Ala) + AMP + diphosphate. In terms of biological role, catalyzes the attachment of alanine to tRNA(Ala) in a two-step reaction: alanine is first activated by ATP to form Ala-AMP and then transferred to the acceptor end of tRNA(Ala). Also edits incorrectly charged Ser-tRNA(Ala) and Gly-tRNA(Ala) via its editing domain. In Histophilus somni (strain 2336) (Haemophilus somnus), this protein is Alanine--tRNA ligase.